The chain runs to 361 residues: Protein phosphatase 1 regulatory subunit 7 (361 aa).

The disordered stretch occupies residues 1–64; it reads MAAERGAGQQ…RGAEDPEEEH (64 aa). Ala2 carries the N-acetylalanine modification. Phosphoserine occurs at positions 12, 24, 27, 45, and 48. Positions 17–34 are enriched in basic and acidic residues; the sequence is EVDRRVESEESGDEEGKK. The span at 48–58 shows a compositional bias: basic and acidic residues; sequence SLKDGVDRGAE. 11 LRR repeats span residues 78–99, 100–121, 122–143, 144–165, 166–187, 188–209, 210–231, 232–253, 254–275, 276–297, and 298–319; these read DAEDVDLTHYRIGKIEGLEVLK, KVKSLCLRQNLIKCIENLEELQ, SLRELDLYDNQIKKIENLEALT, ELEVLDISFNMLRNIEGIDKLT, QLKKLFLVNNKINKIENISNLH, QLQMLELGSNRIRAIENIDTLT, NLESLFLGKNKITKLQNLDALT, NLTVLSVQSNRLAKIEGLQSLV, NLRELYLSNNGIEVIEGLENNN, KLTMLDIASNRIKKIENISHLT, and ELQEFWMNDNLLESWSDLDELK. Residue Ser323 is modified to Phosphoserine. An LRRCT domain is found at 332–361; it reads NPLQKDPQYRRKVMLALPSVRQIDATYVRF.

The protein belongs to the SDS22 family. In terms of assembly, interacts with PPP1CA, PPP1CB and PPP1CC/PPP1G. Widely expressed with high level in testis. Expression increases during puberty. Expressed in spermatids and probably also in spermatozoa.

Its subcellular location is the nucleus. Functionally, regulatory subunit of protein phosphatase 1. The chain is Protein phosphatase 1 regulatory subunit 7 (Ppp1r7) from Mus musculus (Mouse).